The sequence spans 85 residues: Small integral membrane protein 35 (85 aa).

Residues 7-27 (ISTLGMILGVGLSLLLVSILG) traverse the membrane as a helical segment.

Its subcellular location is the membrane. This is Small integral membrane protein 35 from Mus musculus (Mouse).